The primary structure comprises 222 residues: DUF1769 family protein (222 aa).

It belongs to the UPF0590 family.

Its subcellular location is the cytoplasm. The protein resides in the nucleus. This chain is DUF1769 family protein, found in Schizosaccharomyces pombe (strain 972 / ATCC 24843) (Fission yeast).